Consider the following 408-residue polypeptide: LL-diaminopimelate aminotransferase (408 aa).

Residues tyrosine 15 and glycine 42 each coordinate substrate. Pyridoxal 5'-phosphate contacts are provided by residues tyrosine 72, alanine 108–lysine 109, tyrosine 132, asparagine 186, tyrosine 217, and serine 245–serine 247. 3 residues coordinate substrate: lysine 109, tyrosine 132, and asparagine 186. Residue lysine 248 is modified to N6-(pyridoxal phosphate)lysine. Residues arginine 256 and asparagine 291 each contribute to the pyridoxal 5'-phosphate site. Substrate-binding residues include asparagine 291 and arginine 386.

Belongs to the class-I pyridoxal-phosphate-dependent aminotransferase family. LL-diaminopimelate aminotransferase subfamily. Homodimer. It depends on pyridoxal 5'-phosphate as a cofactor.

It carries out the reaction (2S,6S)-2,6-diaminopimelate + 2-oxoglutarate = (S)-2,3,4,5-tetrahydrodipicolinate + L-glutamate + H2O + H(+). The protein operates within amino-acid biosynthesis; L-lysine biosynthesis via DAP pathway; LL-2,6-diaminopimelate from (S)-tetrahydrodipicolinate (aminotransferase route): step 1/1. In terms of biological role, involved in the synthesis of meso-diaminopimelate (m-DAP or DL-DAP), required for both lysine and peptidoglycan biosynthesis. Catalyzes the direct conversion of tetrahydrodipicolinate to LL-diaminopimelate. The sequence is that of LL-diaminopimelate aminotransferase from Desulfotalea psychrophila (strain LSv54 / DSM 12343).